Consider the following 395-residue polypeptide: Zinc-regulated GTPase metalloprotein activator 1B (395 aa).

Residues 1–36 (MLPAVGSADEEEDPAEEDCPELVPMETTQSEEEEKS) form a disordered region. Residues 8 to 20 (ADEEEDPAEEDCP) show a composition bias toward acidic residues. A psi-PxLVp motif motif is present at residues 17 to 24 (EDCPELVP). 49–56 (GYLGAGKT) serves as a coordination point for GTP. Zn(2+) is bound by residues Cys-107, Cys-109, and Cys-110. The short motif at 107 to 110 (CLCC) is the CXCC motif element. Residues 110 to 114 (CSVKD) and 203 to 206 (NKTD) each bind GTP. The CobW C-terminal domain occupies 274 to 377 (IVTITFEVPG…ILKQLFIATV (104 aa)).

The protein belongs to the SIMIBI class G3E GTPase family. ZNG1 subfamily.

Its subcellular location is the nucleus. The enzyme catalyses GTP + H2O = GDP + phosphate + H(+). Functionally, zinc chaperone that directly transfers zinc cofactor to target metalloproteins, thereby activating them. Catalyzes zinc insertion into the active site of methionine aminopeptidase METAP1, which function to cleave the initiator methionine from polypeptides during or after protein translation. Mechanistically, the N-terminal psi-PxLVp motif binds to the C6H2-type zinc finger of inactive form of METAP1. After formation of the docked complex, zinc is transferred from the CXCC motif in the GTPase domain of ZNG1B to the zinc binding site in the peptidase domain of METAP1 in a process requiring GTP hydrolysis. GTP/GDP exchange is required for release of active METAP1. This Homo sapiens (Human) protein is Zinc-regulated GTPase metalloprotein activator 1B.